The following is a 297-amino-acid chain: Ribonuclease HIII (297 aa).

Residues 81 to 297 (IPIIGTDEVG…NTKKAQALLK (217 aa)) form the RNase H type-2 domain. A divalent metal cation is bound by residues Asp-87, Glu-88, and Asp-192.

Belongs to the RNase HII family. RnhC subfamily. Requires Mn(2+) as cofactor. Mg(2+) is required as a cofactor.

The protein resides in the cytoplasm. It catalyses the reaction Endonucleolytic cleavage to 5'-phosphomonoester.. Endonuclease that specifically degrades the RNA of RNA-DNA hybrids. The polypeptide is Ribonuclease HIII (Streptococcus agalactiae serotype Ia (strain ATCC 27591 / A909 / CDC SS700)).